The primary structure comprises 550 residues: Calcium-dependent protein kinase 20 (550 aa).

Residues 1 to 58 are disordered; the sequence is MGNCCVTPEGSGRGRKKQQQEQKQKQKEPKQQQQQQKKGKKPNPFSIEYNRSSAPSGH. The N-myristoyl glycine moiety is linked to residue G2. Over residues 18–30 the composition is skewed to basic and acidic residues; that stretch reads QQQEQKQKQKEPK. A Protein kinase domain is found at 75–333; that stretch reads YELGGELGRG…AQQVLDHPWL (259 aa). ATP is bound by residues 81-89 and K104; that span reads LGRGEFGVT. D199 serves as the catalytic Proton acceptor. Positions 339–369 are autoinhibitory domain; sequence APNVNLGETVKARLQQFSVMNKFKKHALRVI. EF-hand domains follow at residues 376–411, 412–447, 448–483, and 484–519; these read EEVA…LGHQ, MADA…LRKI, GNDE…DLGA, and NHEE…GTDW. Residues D389, N391, D393, M395, E400, D425, D427, N429, S431, E436, D461, N463, S465, Y467, E472, D497, D499, D501, K503, and E508 each coordinate Ca(2+).

It belongs to the protein kinase superfamily. Ser/Thr protein kinase family. CDPK subfamily. As to expression, expressed in roots and leaf blades.

The protein localises to the membrane. The catalysed reaction is L-seryl-[protein] + ATP = O-phospho-L-seryl-[protein] + ADP + H(+). The enzyme catalyses L-threonyl-[protein] + ATP = O-phospho-L-threonyl-[protein] + ADP + H(+). With respect to regulation, activated by calcium. Autophosphorylation may play an important role in the regulation of the kinase activity. In terms of biological role, may play a role in signal transduction pathways that involve calcium as a second messenger. This Oryza sativa subsp. japonica (Rice) protein is Calcium-dependent protein kinase 20.